A 571-amino-acid polypeptide reads, in one-letter code: MPYRMDRRAYAETYGPTVGDRIRLADTELFIEVEQDFTSYGDEVKFGGGKVIRDGMGQSPIANADGAVDLVITNALILDWWGIVKADIGIKDGKIFKIGKAGNPYIQDNVDIIIGPGTEALAGEGMILTAGGIDAHIHFICPQQIEVAIASGITTMIGGGTGPATGTNATTCTPGPWNIYRMLQAADAFPVNLGFLGKGNASKPQGLVEQVAAGAMGLKLHEDWGTTPAAIDTCLSVAATYDVQVAIHTDTLNEAGFVEDTIAAFKNRVIHTYHTEGAGGGHAPDIIKVCGQANVLPSSTNPTRPYTLNTLDEHLDMLMVCHHLDPAIAEDVAFAESRIRRETIAAEDILHDLGAFSMISSDSQAMGRVGEVIIRTWQTSHKMKVQRGILNPQGNEQKADNFRAKRYVAKYTINPAIAHGIAQYVGSVEEGKLADLCLWHPAFFGVKPEIVIKGGMIAWSQMGDANASIPTPQPVYMRPMFGSFAGARHATSLTFVSQAALENEIPSQLGLQKAAVAVSGTRQLSKRDMKLNDALPHIEVDPETYQVRADGELLICEPATVLPMAQRYFLF.

In terms of domain architecture, Urease spans 131–571 (GGIDAHIHFI…LPMAQRYFLF (441 aa)). Residues His136, His138, and Lys219 each coordinate Ni(2+). The residue at position 219 (Lys219) is an N6-carboxylysine. His221 is a substrate binding site. Ni(2+) contacts are provided by His248 and His274. The active-site Proton donor is the His322. Asp362 provides a ligand contact to Ni(2+).

It belongs to the metallo-dependent hydrolases superfamily. Urease alpha subunit family. In terms of assembly, heterotrimer of UreA (gamma), UreB (beta) and UreC (alpha) subunits. Three heterotrimers associate to form the active enzyme. The cofactor is Ni cation. Carboxylation allows a single lysine to coordinate two nickel ions.

It localises to the cytoplasm. The enzyme catalyses urea + 2 H2O + H(+) = hydrogencarbonate + 2 NH4(+). It participates in nitrogen metabolism; urea degradation; CO(2) and NH(3) from urea (urease route): step 1/1. This is Urease subunit alpha from Nostoc punctiforme (strain ATCC 29133 / PCC 73102).